A 485-amino-acid chain; its full sequence is Rhamnulokinase (485 aa).

10 to 14 (ASSGR) is a binding site for ATP. Residues A78 and 233 to 235 (HDT) contribute to the substrate site. D234 (proton acceptor) is an active-site residue. Residue T256 coordinates ATP. Substrate is bound at residue N293. Q301 contacts ATP. A disulfide bond links C351 and C368. Position 400 (G400) interacts with ATP.

This sequence belongs to the rhamnulokinase family. The cofactor is Mg(2+).

It catalyses the reaction L-rhamnulose + ATP = L-rhamnulose 1-phosphate + ADP + H(+). It participates in carbohydrate degradation; L-rhamnose degradation; glycerone phosphate from L-rhamnose: step 2/3. Functionally, involved in the catabolism of L-rhamnose (6-deoxy-L-mannose). Catalyzes the transfer of the gamma-phosphate group from ATP to the 1-hydroxyl group of L-rhamnulose to yield L-rhamnulose 1-phosphate. The chain is Rhamnulokinase from Bacillus subtilis (strain 168).